The sequence spans 575 residues: Hemagglutinin-neuraminidase (575 aa).

The span at 1–10 (MDGDRSKRDS) shows a compositional bias: basic and acidic residues. The segment at 1 to 25 (MDGDRSKRDSYWSTSPGGSTTKLVS) is disordered. Over 1-37 (MDGDRSKRDSYWSTSPGGSTTKLVSDSERSGKVDTWL) the chain is Intravirion. The tract at residues 10-14 (SYWST) is incorporation in virion. Polar residues predominate over residues 11–24 (YWSTSPGGSTTKLV). The chain crosses the membrane as a helical span at residues 38–58 (LILAFTQWALSIATVIICIVI). Residues 59 to 140 (AARQGYSMER…RQELTQLCDS (82 aa)) form an involved in interaction with F protein region. At 59 to 575 (AARQGYSMER…SIPKLCKAES (517 aa)) the chain is on the virion surface side. Asn-77 carries an N-linked (GlcNAc...) asparagine; by host glycan. 4 disulfide bridges follow: Cys-192-Cys-216, Cys-258-Cys-271, Cys-357-Cys-469, and Cys-463-Cys-473. An involved in neuraminidase activity region spans residues 254–259 (NRKSCS). Asn-499 and Asn-511 each carry an N-linked (GlcNAc...) asparagine; by host glycan. A disulfide bond links Cys-535 and Cys-544.

The protein belongs to the paramyxoviruses hemagglutinin-neuraminidase family. As to quaternary structure, homotetramer; composed of disulfide-linked homodimers. Interacts with F protein trimer. Post-translationally, N-glycosylated; glycans consist of a mixture of high mannose-type oligosaccharides and of complex-type oligosaccharides.

The protein localises to the virion membrane. It is found in the host cell membrane. The enzyme catalyses Hydrolysis of alpha-(2-&gt;3)-, alpha-(2-&gt;6)-, alpha-(2-&gt;8)- glycosidic linkages of terminal sialic acid residues in oligosaccharides, glycoproteins, glycolipids, colominic acid and synthetic substrates.. Functionally, attaches the virus to sialic acid-containing cell receptors and thereby initiating infection. Binding of HN protein to the receptor induces a conformational change that allows the F protein to trigger virion/cell membranes fusion. Its function is as follows. Neuraminidase activity ensures the efficient spread of the virus by dissociating the mature virions from the neuraminic acid containing glycoproteins. This chain is Hemagglutinin-neuraminidase (HN), found in Cavia cutleri (Guinea pig).